The chain runs to 210 residues: MANAKELKQVLSGPIVSNNPIALQVLGVCSALAVTSKMETALVMTIALTAVCACSNLFISMLRNHIPSSVRIIVQMTIIASLVIVVDQVLQAYAYDVAKQLSVFVGLIITNCIVMGRAEAYAMKTPPMMSFMDGIGNGLGYGAILLSVGFVRELFGNGSLFGVEILSKISDGGWYQPNGLLLLPPSAFFLIGTLIWIIRTVKPEQVEAKG.

Transmembrane regions (helical) follow at residues 14–34 (PIVS…ALAV), 42–62 (LVMT…ISML), 72–92 (IIVQ…VLQA), 103–123 (VFVG…AYAM), 131–151 (FMDG…VGFV), and 178–198 (NGLL…IWII).

This sequence belongs to the NqrDE/RnfAE family. As to quaternary structure, composed of six subunits; NqrA, NqrB, NqrC, NqrD, NqrE and NqrF.

The protein resides in the cell inner membrane. It carries out the reaction a ubiquinone + n Na(+)(in) + NADH + H(+) = a ubiquinol + n Na(+)(out) + NAD(+). In terms of biological role, NQR complex catalyzes the reduction of ubiquinone-1 to ubiquinol by two successive reactions, coupled with the transport of Na(+) ions from the cytoplasm to the periplasm. NqrA to NqrE are probably involved in the second step, the conversion of ubisemiquinone to ubiquinol. In Shewanella woodyi (strain ATCC 51908 / MS32), this protein is Na(+)-translocating NADH-quinone reductase subunit D.